Here is a 495-residue protein sequence, read N- to C-terminus: MRINPTTSDPAVSTLEEKNLGRIAQIIGPVLDVVFPPGKMPNIYNALVVKGRDTVGQQINVTCEVQQLLGNNRVRAVAMSATDGLTRGMEVIDTGAALSVPVGGATLGRIFNVLGEPVDNLGPVDTRTTSPIHRSAPAFIQLDTKLSIFETGIKVVDLLAPYRRGGKIGLFGGAGVGKTVLIMELINNIAKAHGGVSVFGGVGERTREGNDLYMEMKESGVINEKNIAESKVALVYGQMNEPPGARMRVGLTALTMAEYIRDVNEQDVLLFIDNIFRFVQAGSEVSALLGRMPSAVGYQPTLSTEMGSLQERITSTKEGSITSIQAVYVPADDLTDPAPATTFAHLDATTVLSRGLAAKGIYPAVDPLDSTSTMLQPRIVGEEHYETAQRVKQTLQRYKELQDIIAILGLDELSEEDRLTVARARKIERFLSQPFFVAEVFTGSPGKYVGLTETIRGFQLILSGELDGLPEQAFYLVGNIDEATAKAMNLEGEKK.

172–179 contributes to the ATP binding site; that stretch reads GGAGVGKT.

It belongs to the ATPase alpha/beta chains family. F-type ATPases have 2 components, CF(1) - the catalytic core - and CF(0) - the membrane proton channel. CF(1) has five subunits: alpha(3), beta(3), gamma(1), delta(1), epsilon(1). CF(0) has four main subunits: a(1), b(1), b'(1) and c(9-12).

The protein localises to the plastid. It localises to the chloroplast thylakoid membrane. The enzyme catalyses ATP + H2O + 4 H(+)(in) = ADP + phosphate + 5 H(+)(out). Produces ATP from ADP in the presence of a proton gradient across the membrane. The catalytic sites are hosted primarily by the beta subunits. The protein is ATP synthase subunit beta, chloroplastic of Eucomis bicolor (King's flower).